The sequence spans 83 residues: Beta/kappa-theraphotoxin-Cg2a (83 aa).

The signal sequence occupies residues 1–21 (MKASVFAVILGLVVLCACSFA). Residues 22–53 (EDEQDQFVSPNELLKSMFVESRHEFTPEVEGR) constitute a propeptide that is removed on maturation. Disulfide bonds link cysteine 55-cysteine 69, cysteine 62-cysteine 74, and cysteine 68-cysteine 78. Isoleucine 82 is modified (isoleucine amide).

This sequence belongs to the neurotoxin 30 (phrixotoxin) family. As to expression, expressed by the venom gland.

It is found in the secreted. Its function is as follows. This gating-modifier toxin shows an important inhibitory activity on sodium channels. It is very active on Nav1.7/SCN9A (IC(50)~0.6 nM), and also shows activity on Nav1.3/SCN3A (IC(50)=292 nM), Nav1.4/SCN4A (IC(50)=2.2-159 nM), and Nav1.5/SCN5A (IC(50)=2.3-2.9 uM). It has also been shown to inhibit tetrodotoxin (TTX)-resistant (IC(50)=27.6 nM) and TTX-sensitive (IC(50)=30.2 nM) sodium channels in rat dorsal root ganglion neurons. Lower inhibitory activity has also been shown on potassium channels: Kv4.2/KCND2 (IC(50)=604.2 nM), Kv4.3/KCND3 (IC(50)=425.1 nM), and Kv2.1/KCNB1 (IC(50)=14.3 uM). It binds to phospholipid membranes. Like its analog AM-8145, it may act by interacting only with the second voltage-sensor domain of Nav1.7/SCN9A. This chain is Beta/kappa-theraphotoxin-Cg2a, found in Chilobrachys guangxiensis (Chinese earth tiger tarantula).